A 492-amino-acid polypeptide reads, in one-letter code: Target of Myb1 membrane trafficking protein (492 aa).

At Met-1 the chain carries N-acetylmethionine. Phosphoserine is present on Ser-11. The VHS domain occupies 20–152 (ATDGSLQSED…DLRRKGLEFP (133 aa)). The KRKK signature appears at 48–56 (KDAFRAVKK). A Phosphoserine modification is found at Ser-160. The residue at position 164 (Thr-164) is a Phosphothreonine. Positions 167-195 (RTVFNSETPSRQNSVSSNTSQRGDLSQHA) are enriched in polar residues. A disordered region spans residues 167 to 215 (RTVFNSETPSRQNSVSSNTSQRGDLSQHATPLPTPAVLPGDSPITPTPE). 3 positions are modified to phosphoserine: Ser-176, Ser-180, and Ser-208. In terms of domain architecture, GAT spans 215 to 303 (EQIGKLRSEL…VFLRHERFER (89 aa)). The clathrin box stretch occupies residues 321-326 (DLIDMG). Phosphoserine occurs at positions 355 and 376. Lys-385 participates in a covalent cross-link: Glycyl lysine isopeptide (Lys-Gly) (interchain with G-Cter in SUMO2). The tract at residues 392–463 (TDGLAGALDA…ADRLPNLASP (72 aa)) is interaction with MYO6. The segment at 450 to 492 (RAKAADRLPNLASPSAEGPPRPSPGTAPRRKTQEKDDDMLFAL) is disordered. The residue at position 462 (Ser-462) is a Phosphoserine.

Belongs to the TOM1 family. In terms of assembly, found in a complex with TOLLIP; interacts (via GAT domain) with TOLLIP (via N-terminus); the interactions leads to TOM1-recruitment to endosomes and inhibition of TOLLIP binding to PtdIns(3)P. Interacts (via GAT domain and the C-terminal part of the VHS domain) with UBC/ubiquitin. Interacts (via clathrin box and C-terminus) with clathrin heavy chain. Interacts with MYO6. Interacts with TAX1BP1; CALCOCO2/NDP52 and OPTN; the interaction is indirect and is mediated by MYO6, which acts as a bridge between TOM1 and the three autophagy receptors. Interacts (via C-terminus) with ZFYVE16 (via C-terminus); interaction is required to target TOM1 and clathrin to endosomes. Interacts with LRBA. Post-translationally, monoubiquitinated. In terms of tissue distribution, ubiquitous. In adult brain, it is highly expressed at the mesencephalic level, in the hippocampal formation and medial lemniscus. In cerebellum, it is highly expressed in Purkinje cells and granular layers.

It is found in the cytoplasm. It localises to the endosome membrane. Its subcellular location is the early endosome membrane. In terms of biological role, adapter protein that plays a role in the intracellular membrane trafficking of ubiquitinated proteins, thereby participating in autophagy, ubiquitination-dependent signaling and receptor recycling pathways. Acts as a MYO6/Myosin VI adapter protein that targets MYO6 to endocytic structures. Together with MYO6, required for autophagosomal delivery of endocytic cargo, the maturation of autophagosomes and their fusion with lysosomes. MYO6 links TOM1 with autophagy receptors, such as TAX1BP1; CALCOCO2/NDP52 and OPTN. Binds to polyubiquitinated proteins via its GAT domain. In a complex with TOLLIP, recruits ubiquitin-conjugated proteins onto early endosomes. The Tom1-Tollip complex may regulate endosomal trafficking by linking polyubiquitinated proteins to clathrin. Mediates clathrin recruitment to early endosomes by ZFYVE16. Modulates binding of TOLLIP to phosphatidylinositol 3-phosphate (PtdIns(3)P) via binding competition; the association with TOLLIP may favor the release of TOLLIP from endosomal membranes, allowing TOLLIP to commit to cargo trafficking. Acts as a phosphatidylinositol 5-phosphate (PtdIns(5)P) effector by binding to PtdIns(5)P, thereby regulating endosomal maturation. PtdIns(5)P-dependent recruitment to signaling endosomes may block endosomal maturation. Also inhibits Toll-like receptor (TLR) signaling and participates in immune receptor recycling. The chain is Target of Myb1 membrane trafficking protein from Mus musculus (Mouse).